A 198-amino-acid polypeptide reads, in one-letter code: Superoxide dismutase [Mn], mitochondrial (198 aa).

Histidine 26 is a binding site for Mn(2+). Residue tyrosine 34 is modified to 3'-nitrotyrosine. 2 positions are modified to N6-acetyllysine; alternate: lysine 44 and lysine 51. Lysine 44 and lysine 51 each carry N6-succinyllysine; alternate. Residue histidine 74 coordinates Mn(2+). Lysine 90 is subject to N6-acetyllysine. Lysine 98 and lysine 106 each carry N6-acetyllysine; alternate. Lysine 98 and lysine 106 each carry N6-succinyllysine; alternate. 2 residues coordinate Mn(2+): aspartate 159 and histidine 163. The residue at position 178 (lysine 178) is an N6-acetyllysine.

It belongs to the iron/manganese superoxide dismutase family. Homotetramer. It depends on Mn(2+) as a cofactor. Nitrated under oxidative stress. Nitration coupled with oxidation inhibits the catalytic activity. Post-translationally, acetylation at Lys-98 decreases enzymatic activity. Deacetylated by SIRT3 upon exposure to ionizing radiations or after long fasting. In terms of processing, polyubiquitinated; leading to proteasomal degradation. Deubiquitinated by USP36 which increases protein stability.

It is found in the mitochondrion matrix. The catalysed reaction is 2 superoxide + 2 H(+) = H2O2 + O2. Destroys superoxide anion radicals which are normally produced within the cells and which are toxic to biological systems. This is Superoxide dismutase [Mn], mitochondrial (SOD2) from Hylobates lar (Lar gibbon).